The primary structure comprises 46 residues: Daisho2 (46 aa).

Residues 1–22 form the signal peptide; the sequence is MNCLKICGFFFALIAALATAEA.

In terms of tissue distribution, hemolymph (at protein level).

It localises to the secreted. Peptide which plays a role in the humoral immune response to a subset of filamentous fungi, including F.oxysporum and F.verticillioides. This is Daisho2 from Drosophila melanogaster (Fruit fly).